The following is a 52-amino-acid chain: Proteinase inhibitor PSI-1.2 (52 aa).

4 disulfides stabilise this stretch: Cys-3–Cys-32, Cys-7–Cys-28, Cys-16–Cys-38, and Cys-31–Cys-49.

Its function is as follows. Potent inhibitor of trypsin and a weaker inhibitor of chymotrypsin. It does not inhibit elastase and subtilisin DY. The chain is Proteinase inhibitor PSI-1.2 from Capsicum annuum (Capsicum pepper).